The sequence spans 204 residues: MKLNEQIPKDLLRLIKSSKYVHVATCSSNCIPSVSLMHYIFVSSAETFHKHEYSIEIDCNDYIIFTVFEKSVTFRNVMSNPNVALLFHDWITAKNLTLRKKSVHSKDDFSFVESESTKFNNFLRDLNQSELNQVSATINGIADIVNPNSEESTYYRRLLLTVNPDADIFILGEDTAIIKVNIQKIKVSDMENNTSTYGQTVQPV.

Residues Phe65–Thr66 and Asn127 contribute to the FMN site.

It belongs to the pyridoxamine 5'-phosphate oxidase family. Requires FMN as cofactor.

It is found in the cytoplasm. It localises to the nucleus. In Saccharomyces cerevisiae (strain ATCC 204508 / S288c) (Baker's yeast), this protein is Pyridoxamine 5'-phosphate oxidase YLR456W homolog.